We begin with the raw amino-acid sequence, 480 residues long: NADH-quinone oxidoreductase subunit N (480 aa).

13 consecutive transmembrane segments (helical) span residues 10-30, 40-60, 80-100, 117-137, 166-186, 208-228, 246-266, 276-296, 304-324, 330-350, 374-394, 409-431, and 452-472; these read FISIGPLLIVLMTALIIILIE, WSSLISIGGLTLSIFAVWGGI, FFTVFFLVIGIGASLLATAFF, AVFGLILIGAAADLLTLFLGI, LMGSIVAGFLLYGIALVYGAI, VLFFSGIAMITLGLAFKAALV, TAFMAVGTKVGVFAAFVRLFF, WNQVIDTLVYATLIYANFVAL, FFAYSSISHAGFLMIPVVIGN, ALTFYLVIYAIATFGCFAVLA, LASLLSICLLTLAGIPPTAGF, YYGLVIVGLLTTILSSYYYLRII, and IVGTTSFIAIIILSFYPAPFL.

This sequence belongs to the complex I subunit 2 family. NDH-1 is composed of 14 different subunits. Subunits NuoA, H, J, K, L, M, N constitute the membrane sector of the complex.

It is found in the cell inner membrane. It carries out the reaction a quinone + NADH + 5 H(+)(in) = a quinol + NAD(+) + 4 H(+)(out). In terms of biological role, NDH-1 shuttles electrons from NADH, via FMN and iron-sulfur (Fe-S) centers, to quinones in the respiratory chain. The immediate electron acceptor for the enzyme in this species is believed to be ubiquinone. Couples the redox reaction to proton translocation (for every two electrons transferred, four hydrogen ions are translocated across the cytoplasmic membrane), and thus conserves the redox energy in a proton gradient. This is NADH-quinone oxidoreductase subunit N from Protochlamydia amoebophila (strain UWE25).